A 97-amino-acid polypeptide reads, in one-letter code: MCFFFKLSKPKTTPHTNSNIVEIEYITSNGNSKQQIGELVNLELDGDDDVGFYYVLTLKLPNGRNKKFKEYHLNGKIKFNGKRFSDLKELKEYTSTH.

This is an uncharacterized protein from Haemophilus influenzae (Bacteriophage HP1).